We begin with the raw amino-acid sequence, 172 residues long: S-ribosylhomocysteine lyase (172 aa).

H54, H58, and C128 together coordinate Fe cation.

Belongs to the LuxS family. As to quaternary structure, homodimer. It depends on Fe cation as a cofactor.

The catalysed reaction is S-(5-deoxy-D-ribos-5-yl)-L-homocysteine = (S)-4,5-dihydroxypentane-2,3-dione + L-homocysteine. Its function is as follows. Involved in the synthesis of autoinducer 2 (AI-2) which is secreted by bacteria and is used to communicate both the cell density and the metabolic potential of the environment. The regulation of gene expression in response to changes in cell density is called quorum sensing. Catalyzes the transformation of S-ribosylhomocysteine (RHC) to homocysteine (HC) and 4,5-dihydroxy-2,3-pentadione (DPD). The polypeptide is S-ribosylhomocysteine lyase (Photobacterium profundum (strain SS9)).